Consider the following 876-residue polypeptide: Pre-mRNA-splicing factor ATP-dependent RNA helicase-like protein PRP2 (876 aa).

Residues 1–111 are disordered; that stretch reads MSSITSETGK…KGLLGDSENE (111 aa). At serine 2 the chain carries N-acetylserine. A compositionally biased stretch (polar residues) spans 61-70; it reads VFSNTNQGPE. A Helicase ATP-binding domain is found at 233–399; sequence LQEIKKNQVL…FDNCPIFNVP (167 aa). An ATP-binding site is contributed by 246 to 253; sequence GETGSGKT. Positions 346–349 match the DEAH box motif; that stretch reads DEAH. Positions 424-598 constitute a Helicase C-terminal domain; that stretch reads TIFQIHTTQS…NTVLLLLSLG (175 aa).

It belongs to the DEAD box helicase family. DEAH subfamily. Interacts directly with pre-mRNA. According to PubMed:2251118, associated with spliceosomes prior to and throughout step 1 of the splicing reaction. According to PubMed:8943336, it leaves the spliceosome before reaction 1. Interacts with SPP2.

The protein localises to the nucleus. It carries out the reaction ATP + H2O = ADP + phosphate + H(+). In terms of biological role, involved in pre-mRNA splicing. Is required together with ATP and at least one other factor, for the first cleavage-ligation reaction. Functions as a molecular motor in the activation of the precatalytic spliceosome for the first transesterification reaction of pre-mRNA splicing by hydrolyzing ATP to cause the activation of the spliceosome without the occurrence of splicing. Capable of hydrolyzing nucleoside triphosphates in the presence of single-stranded RNAs such as poly(U). This is Pre-mRNA-splicing factor ATP-dependent RNA helicase-like protein PRP2 (PRP2) from Saccharomyces cerevisiae (strain ATCC 204508 / S288c) (Baker's yeast).